The primary structure comprises 439 residues: MQSQYSHIVLGLGATGLSVVRYLCGKGITPLVMDSRRQPPGAETLASSFPEVKLIAGGFDCRYLVQATQIIISPGIAMNTPEVRAALDMGIEVIGDVELFAREIADRKPCVIGITGSNGKTTVTTLVGEMLREAGIAVAVGGNIGIPALDLLKENADIFVLELSSFQLETTHSLNCVASTCLNVTEDHMDRYSDMDAYRKAKLRLYHQSRSIIFNRDDALTIPTEPMNQNSFGLAPPEGDEWGICDSKIYHGHSEIMPITEVSLIGSHNHANLLAAMALVYAVGVDKQVMANVARTFTGLSHRCEVVGVKGGVTYVNDSKATNVGATVAALDGLSDHLGDIILIAGGDGKGADFSPLEEPLTKVTHLITLGRDGNKIAALKEGAIKVDSMAAAVAKAAQLATSGDIVLLSPACASLDMYSNFMARGDDFRSQVEQLDGE.

An ATP-binding site is contributed by 116–122; it reads GSNGKTT.

It belongs to the MurCDEF family.

It localises to the cytoplasm. It catalyses the reaction UDP-N-acetyl-alpha-D-muramoyl-L-alanine + D-glutamate + ATP = UDP-N-acetyl-alpha-D-muramoyl-L-alanyl-D-glutamate + ADP + phosphate + H(+). It participates in cell wall biogenesis; peptidoglycan biosynthesis. Functionally, cell wall formation. Catalyzes the addition of glutamate to the nucleotide precursor UDP-N-acetylmuramoyl-L-alanine (UMA). The chain is UDP-N-acetylmuramoylalanine--D-glutamate ligase from Shewanella oneidensis (strain ATCC 700550 / JCM 31522 / CIP 106686 / LMG 19005 / NCIMB 14063 / MR-1).